Reading from the N-terminus, the 194-residue chain is High mobility group protein B4 (194 aa).

DNA-binding regions (HMG box) lie at residues 9–79 (PKAN…MNYF) and 93–161 (PRRP…SVYR).

Belongs to the HMGB family.

Its subcellular location is the nucleus. The protein localises to the chromosome. The sequence is that of High mobility group protein B4 (HMGB4) from Bos taurus (Bovine).